Reading from the N-terminus, the 343-residue chain is NADP-dependent alkenal double bond reductase P2 (343 aa).

Substrate contacts are provided by Y52 and Y79. NADP(+)-binding positions include 164–167 (GAVG), K190, Y206, N230, 252–258 (CGMISQY), 282–284 (FVV), and N332.

The protein belongs to the NADP-dependent oxidoreductase L4BD family. Homodimer.

It carries out the reaction an n-alkanal + NAD(+) = an alk-2-enal + NADH + H(+). The enzyme catalyses an n-alkanal + NADP(+) = an alk-2-enal + NADPH + H(+). In terms of biological role, catalyzes the reduction of the 7-8 double bond of phenylpropanal substrates, such as p-coumaryl aldehyde and coniferyl aldehyde (in vitro). Has activity towards toxic substrates, such as 4-hydroxy-(2E)-nonenal (in vitro). May play a distinct role in plant antioxidant defense and is possibly involved in NAD(P)/NAD(P)h homeostasis. This is NADP-dependent alkenal double bond reductase P2 (P2) from Arabidopsis thaliana (Mouse-ear cress).